Consider the following 290-residue polypeptide: Ribosomal RNA small subunit methyltransferase A (290 aa).

Residues N27, L29, G54, E75, D100, and N125 each contribute to the S-adenosyl-L-methionine site.

Belongs to the class I-like SAM-binding methyltransferase superfamily. rRNA adenine N(6)-methyltransferase family. RsmA subfamily.

Its subcellular location is the cytoplasm. The enzyme catalyses adenosine(1518)/adenosine(1519) in 16S rRNA + 4 S-adenosyl-L-methionine = N(6)-dimethyladenosine(1518)/N(6)-dimethyladenosine(1519) in 16S rRNA + 4 S-adenosyl-L-homocysteine + 4 H(+). Its function is as follows. Specifically dimethylates two adjacent adenosines (A1518 and A1519) in the loop of a conserved hairpin near the 3'-end of 16S rRNA in the 30S particle. May play a critical role in biogenesis of 30S subunits. This Streptococcus pneumoniae (strain 70585) protein is Ribosomal RNA small subunit methyltransferase A.